We begin with the raw amino-acid sequence, 1446 residues long: Major viral transcription factor ICP4 homolog (1446 aa).

4 disordered regions span residues 25-59 (AEEEGIASGPDGGSQGSRRRGSSGEDLLFGPGGLF), 73-493 (AAAG…PPAD), 801-987 (PGPA…HTPR), and 1385-1446 (THRP…LLLR). Residues 73 to 94 (AAAGATRPPRPPSAQQQQQPRR) show a composition bias toward low complexity. Residues 101–112 (VLDDEDEEEDEP) show a composition bias toward acidic residues. Low complexity-rich tracts occupy residues 166–189 (RSSPSAASPASSSGSPGPSAAPRR) and 216–241 (PAAVAAAPARRGPASPASPAAGPVSA). Positions 262–277 (REPLLDEPAAARRLDP) are enriched in basic and acidic residues. Composition is skewed to low complexity over residues 284 to 306 (SPVSSNPNSNSNSTTTVAVETVA) and 345 to 397 (GFSS…SSSS). Residues 415 to 426 (GPPPSPPAPAAA) show a composition bias toward pro residues. Over residues 427 to 442 (PRPSASSASSSAAASP) the composition is skewed to low complexity. The segment covering 803-815 (PAEPAPGLPPLWP) has biased composition (pro residues). Residues 827 to 877 (PAAAGAPSGLPGSGPSSPASTKSSSSTKSSSSTKSGLSGSSGYASSPAAGP) are compositionally biased toward low complexity. Residues 883 to 892 (RRKKKRRAPG) show a composition bias toward basic residues. Low complexity predominate over residues 933–952 (LGLGPAPDPAPALLSSSSSS).

The protein belongs to the herpesviridae ICP4 family. A long stretch of serine residues may be a major site of phosphorylation.

The protein localises to the host nucleus. In terms of biological role, this IE protein is a multifunctional protein capable of migrating to the nucleus, binding to DNA, trans-activating other viral genes, and autoregulating its own synthesis. This chain is Major viral transcription factor ICP4 homolog (IE), found in Suid herpesvirus 1 (strain Kaplan) (SuHV-1).